Consider the following 1462-residue polypeptide: Gag-Pol polyprotein (1462 aa).

Glycine 2 carries the N-myristoyl glycine; by host lipid modification. The interaction with Gp41 stretch occupies residues 7 to 31 (VLRGKKADELEKIRLRPGGKKKYRL). Residues 16 to 22 (LEKIRLR) carry the Nuclear export signal motif. The short motif at 26 to 32 (KKKYRLK) is the Nuclear localization signal element. The segment at 191–228 (NCVGDHQAAMQIIREIINEEAADWDVQHPIPGPLPAGQ) is interaction with human PPIA/CYPA and NUP153. Residues 279-364 (YNPTNILDIK…GGPGQKARLM (86 aa)) are dimerization/Multimerization of capsid protein p24. 2 CCHC-type zinc fingers span residues 388–405 (IKCW…QCRA) and 409–426 (QGCW…NCPD). A disordered region spans residues 441 to 507 (APQLPRGPKF…RRDTTQRDDR (67 aa)). The segment covering 454-468 (NTNSTPNGSSSGPTG) has biased composition (low complexity). Composition is skewed to basic and acidic residues over residues 471–490 (HAAR…RSDR) and 497–507 (ARRDTTQRDDR). Residues 512–516 (PQFSL) form a dimerization of protease region. Residues 531–600 (VEVLLDTGAD…TPINIFGRNI (70 aa)) enclose the Peptidase A2 domain. The active-site For protease activity; shared with dimeric partner is the aspartate 536. 2 dimerization of protease regions span residues 560–566 (GIGGFIN) and 599–611 (NILT…LNLP). A Reverse transcriptase domain is found at 654–844 (EGQLEEAPPT…PPYQWMGYEL (191 aa)). The Mg(2+) site is built by aspartate 720, aspartate 795, and aspartate 796. The segment at 837 to 845 (YQWMGYELW) is RT 'primer grip'. A Tryptophan repeat motif motif is present at residues 1007-1023 (WEQWWDNYWQVTWIPDW). The RNase H type-1 domain occupies 1043-1166 (IPGAETFYTD…IDHLVSQGIR (124 aa)). Mg(2+) contacts are provided by aspartate 1052, glutamate 1087, aspartate 1107, and aspartate 1158. The Integrase-type zinc finger occupies 1172-1213 (ERIEPAQEEHGKYHSNVKELAHKFGLPNLVARQIVNTCAQCQ). 4 residues coordinate Zn(2+): histidine 1181, histidine 1185, cysteine 1209, and cysteine 1212. The 152-residue stretch at 1222–1373 (QVNAELGTWQ…TPVERLVNMI (152 aa)) folds into the Integrase catalytic domain. Residues aspartate 1233, aspartate 1285, and glutamate 1321 each contribute to the Mg(2+) site. Residues 1392 to 1439 (FRVYFREGRNQLWQGPGELLWKGDGAVIVKVGTDIKVIPRRKAKIIRD) constitute a DNA-binding region (integrase-type). The tract at residues 1443–1462 (RQEMDSGSHLEGAREDGEMA) is disordered.

Homotrimer; further assembles as hexamers of trimers. Interacts with gp41 (via C-terminus). Interacts with host CALM1; this interaction induces a conformational change in the Matrix protein, triggering exposure of the myristate group. Interacts with host AP3D1; this interaction allows the polyprotein trafficking to multivesicular bodies during virus assembly. Part of the pre-integration complex (PIC) which is composed of viral genome, matrix protein, Vpr and integrase. In terms of assembly, homodimer; the homodimer further multimerizes as homohexamers or homopentamers. Interacts with human PPIA/CYPA. Interacts with human NUP153. Interacts with host PDZD8; this interaction stabilizes the capsid. Interacts with monkey TRIM5; this interaction destabilizes the capsid. As to quaternary structure, homodimer, whose active site consists of two apposed aspartic acid residues. Heterodimer of p66 RT and p51 RT (RT p66/p51). Heterodimerization of RT is essential for DNA polymerase activity. The overall folding of the subdomains is similar in p66 RT and p51 RT but the spatial arrangements of the subdomains are dramatically different. In terms of assembly, homotetramer; may further associate as a homohexadecamer. Part of the pre-integration complex (PIC) which is composed of viral genome, matrix protein, Vpr and integrase. Interacts with human SMARCB1/INI1 and human PSIP1/LEDGF isoform 1. Interacts with human KPNA3; this interaction might play a role in nuclear import of the pre-integration complex. Interacts with human NUP153; this interaction might play a role in nuclear import of the pre-integration complex. Mg(2+) serves as cofactor. Specific enzymatic cleavages by the viral protease yield mature proteins. The protease is released by autocatalytic cleavage. The polyprotein is cleaved during and after budding, this process is termed maturation. Proteolytic cleavage of p66 RT removes the RNase H domain to yield the p51 RT subunit. Nucleocapsid protein p7 might be further cleaved after virus entry.

It localises to the host cell membrane. Its subcellular location is the host endosome. The protein localises to the host multivesicular body. It is found in the virion membrane. The protein resides in the host nucleus. It localises to the host cytoplasm. Its subcellular location is the virion. It carries out the reaction Endopeptidase for which the P1 residue is preferably hydrophobic.. The enzyme catalyses Endohydrolysis of RNA in RNA/DNA hybrids. Three different cleavage modes: 1. sequence-specific internal cleavage of RNA. Human immunodeficiency virus type 1 and Moloney murine leukemia virus enzymes prefer to cleave the RNA strand one nucleotide away from the RNA-DNA junction. 2. RNA 5'-end directed cleavage 13-19 nucleotides from the RNA end. 3. DNA 3'-end directed cleavage 15-20 nucleotides away from the primer terminus.. The catalysed reaction is 3'-end directed exonucleolytic cleavage of viral RNA-DNA hybrid.. It catalyses the reaction DNA(n) + a 2'-deoxyribonucleoside 5'-triphosphate = DNA(n+1) + diphosphate. Its activity is regulated as follows. Protease: The viral protease is inhibited by many synthetic protease inhibitors (PIs), such as amprenavir, atazanavir, indinavir, loprinavir, nelfinavir, ritonavir and saquinavir. Use of protease inhibitors in tritherapy regimens permit more ambitious therapeutic strategies. Reverse transcriptase/ribonuclease H: RT can be inhibited either by nucleoside RT inhibitors (NRTIs) or by non nucleoside RT inhibitors (NNRTIs). NRTIs act as chain terminators, whereas NNRTIs inhibit DNA polymerization by binding a small hydrophobic pocket near the RT active site and inducing an allosteric change in this region. Classical NRTIs are abacavir, adefovir (PMEA), didanosine (ddI), lamivudine (3TC), stavudine (d4T), tenofovir (PMPA), zalcitabine (ddC), and zidovudine (AZT). Classical NNRTIs are atevirdine (BHAP U-87201E), delavirdine, efavirenz (DMP-266), emivirine (I-EBU), and nevirapine (BI-RG-587). The tritherapies used as a basic effective treatment of AIDS associate two NRTIs and one NNRTI. Mediates, with Gag polyprotein, the essential events in virion assembly, including binding the plasma membrane, making the protein-protein interactions necessary to create spherical particles, recruiting the viral Env proteins, and packaging the genomic RNA via direct interactions with the RNA packaging sequence (Psi). Gag-Pol polyprotein may regulate its own translation, by the binding genomic RNA in the 5'-UTR. At low concentration, the polyprotein would promote translation, whereas at high concentration, the polyprotein would encapsidate genomic RNA and then shut off translation. In terms of biological role, targets the polyprotein to the plasma membrane via a multipartite membrane-binding signal, that includes its myristoylated N-terminus. Matrix protein is part of the pre-integration complex. Implicated in the release from host cell mediated by Vpu. Binds to RNA. Its function is as follows. Forms the conical core that encapsulates the genomic RNA-nucleocapsid complex in the virion. Most core are conical, with only 7% tubular. The core is constituted by capsid protein hexamer subunits. The core is disassembled soon after virion entry. Host restriction factors such as TRIM5-alpha or TRIMCyp bind retroviral capsids and cause premature capsid disassembly, leading to blocks in reverse transcription. Capsid restriction by TRIM5 is one of the factors which restricts HIV-1 to the human species. Host PIN1 apparently facilitates the virion uncoating. On the other hand, interactions with PDZD8 or CYPA stabilize the capsid. Functionally, encapsulates and protects viral dimeric unspliced genomic RNA (gRNA). Binds these RNAs through its zinc fingers. Acts as a nucleic acid chaperone which is involved in rearangement of nucleic acid secondary structure during gRNA retrotranscription. Also facilitates template switch leading to recombination. As part of the polyprotein, participates in gRNA dimerization, packaging, tRNA incorporation and virion assembly. Aspartyl protease that mediates proteolytic cleavages of Gag and Gag-Pol polyproteins during or shortly after the release of the virion from the plasma membrane. Cleavages take place as an ordered, step-wise cascade to yield mature proteins. This process is called maturation. Displays maximal activity during the budding process just prior to particle release from the cell. Also cleaves Nef and Vif, probably concomitantly with viral structural proteins on maturation of virus particles. Hydrolyzes host EIF4GI and PABP1 in order to shut off the capped cellular mRNA translation. The resulting inhibition of cellular protein synthesis serves to ensure maximal viral gene expression and to evade host immune response. In terms of biological role, multifunctional enzyme that converts the viral RNA genome into dsDNA in the cytoplasm, shortly after virus entry into the cell. This enzyme displays a DNA polymerase activity that can copy either DNA or RNA templates, and a ribonuclease H (RNase H) activity that cleaves the RNA strand of RNA-DNA heteroduplexes in a partially processive 3' to 5' endonucleasic mode. Conversion of viral genomic RNA into dsDNA requires many steps. A tRNA(3)-Lys binds to the primer-binding site (PBS) situated at the 5'-end of the viral RNA. RT uses the 3' end of the tRNA primer to perform a short round of RNA-dependent minus-strand DNA synthesis. The reading proceeds through the U5 region and ends after the repeated (R) region which is present at both ends of viral RNA. The portion of the RNA-DNA heteroduplex is digested by the RNase H, resulting in a ssDNA product attached to the tRNA primer. This ssDNA/tRNA hybridizes with the identical R region situated at the 3' end of viral RNA. This template exchange, known as minus-strand DNA strong stop transfer, can be either intra- or intermolecular. RT uses the 3' end of this newly synthesized short ssDNA to perform the RNA-dependent minus-strand DNA synthesis of the whole template. RNase H digests the RNA template except for two polypurine tracts (PPTs) situated at the 5'-end and near the center of the genome. It is not clear if both polymerase and RNase H activities are simultaneous. RNase H probably can proceed both in a polymerase-dependent (RNA cut into small fragments by the same RT performing DNA synthesis) and a polymerase-independent mode (cleavage of remaining RNA fragments by free RTs). Secondly, RT performs DNA-directed plus-strand DNA synthesis using the PPTs that have not been removed by RNase H as primers. PPTs and tRNA primers are then removed by RNase H. The 3' and 5' ssDNA PBS regions hybridize to form a circular dsDNA intermediate. Strand displacement synthesis by RT to the PBS and PPT ends produces a blunt ended, linear dsDNA copy of the viral genome that includes long terminal repeats (LTRs) at both ends. Its function is as follows. Catalyzes viral DNA integration into the host chromosome, by performing a series of DNA cutting and joining reactions. This enzyme activity takes place after virion entry into a cell and reverse transcription of the RNA genome in dsDNA. The first step in the integration process is 3' processing. This step requires a complex comprising the viral genome, matrix protein, Vpr and integrase. This complex is called the pre-integration complex (PIC). The integrase protein removes 2 nucleotides from each 3' end of the viral DNA, leaving recessed CA OH's at the 3' ends. In the second step, the PIC enters cell nucleus. This process is mediated through integrase and Vpr proteins, and allows the virus to infect a non dividing cell. This ability to enter the nucleus is specific of lentiviruses, other retroviruses cannot and rely on cell division to access cell chromosomes. In the third step, termed strand transfer, the integrase protein joins the previously processed 3' ends to the 5' ends of strands of target cellular DNA at the site of integration. The 5'-ends are produced by integrase-catalyzed staggered cuts, 5 bp apart. A Y-shaped, gapped, recombination intermediate results, with the 5'-ends of the viral DNA strands and the 3' ends of target DNA strands remaining unjoined, flanking a gap of 5 bp. The last step is viral DNA integration into host chromosome. This involves host DNA repair synthesis in which the 5 bp gaps between the unjoined strands are filled in and then ligated. Since this process occurs at both cuts flanking the HIV genome, a 5 bp duplication of host DNA is produced at the ends of HIV-1 integration. Alternatively, Integrase may catalyze the excision of viral DNA just after strand transfer, this is termed disintegration. The polypeptide is Gag-Pol polyprotein (gag-pol) (Human immunodeficiency virus type 2 subtype A (isolate SBLISY) (HIV-2)).